A 424-amino-acid polypeptide reads, in one-letter code: Tyrosine--tRNA ligase (424 aa).

Position 37 (tyrosine 37) interacts with L-tyrosine. The short motif at 42–51 is the 'HIGH' region element; that stretch reads PTADSLHLGH. 2 residues coordinate L-tyrosine: tyrosine 175 and glutamine 179. The short motif at 235 to 239 is the 'KMSKS' region element; sequence KFGKT. Lysine 238 is a binding site for ATP. Residues 357-414 enclose the S4 RNA-binding domain; sequence ADLMQALVDAELQPSRGQARKTIASNAVTINGEKQSDPEYIFNDEDRLFGRYTLLRRG.

It belongs to the class-I aminoacyl-tRNA synthetase family. TyrS type 1 subfamily. Homodimer.

The protein localises to the cytoplasm. The enzyme catalyses tRNA(Tyr) + L-tyrosine + ATP = L-tyrosyl-tRNA(Tyr) + AMP + diphosphate + H(+). Its function is as follows. Catalyzes the attachment of tyrosine to tRNA(Tyr) in a two-step reaction: tyrosine is first activated by ATP to form Tyr-AMP and then transferred to the acceptor end of tRNA(Tyr). This chain is Tyrosine--tRNA ligase, found in Salmonella enteritidis PT4 (strain P125109).